The sequence spans 161 residues: Cyclic pyranopterin monophosphate synthase (161 aa).

Substrate contacts are provided by residues 75-77 and 113-114; these read LCH and ME. Asp128 is an active-site residue.

It belongs to the MoaC family. Homohexamer; trimer of dimers.

The catalysed reaction is (8S)-3',8-cyclo-7,8-dihydroguanosine 5'-triphosphate = cyclic pyranopterin phosphate + diphosphate. It functions in the pathway cofactor biosynthesis; molybdopterin biosynthesis. In terms of biological role, catalyzes the conversion of (8S)-3',8-cyclo-7,8-dihydroguanosine 5'-triphosphate to cyclic pyranopterin monophosphate (cPMP). The polypeptide is Cyclic pyranopterin monophosphate synthase (Escherichia coli O9:H4 (strain HS)).